The sequence spans 103 residues: Large ribosomal subunit protein uL24 (103 aa).

The protein belongs to the universal ribosomal protein uL24 family. As to quaternary structure, part of the 50S ribosomal subunit.

Its function is as follows. One of two assembly initiator proteins, it binds directly to the 5'-end of the 23S rRNA, where it nucleates assembly of the 50S subunit. Functionally, one of the proteins that surrounds the polypeptide exit tunnel on the outside of the subunit. The sequence is that of Large ribosomal subunit protein uL24 from Roseobacter denitrificans (strain ATCC 33942 / OCh 114) (Erythrobacter sp. (strain OCh 114)).